Reading from the N-terminus, the 530-residue chain is Light-independent protochlorophyllide reductase subunit B (530 aa).

Residue D36 coordinates [4Fe-4S] cluster. Residue D287 is the Proton donor of the active site. 422–423 (GL) contacts substrate. A disordered region spans residues 453–472 (PAVQTASSEPQPSAIETPSA). Over residues 454 to 463 (AVQTASSEPQ) the composition is skewed to polar residues.

The protein belongs to the ChlB/BchB/BchZ family. As to quaternary structure, protochlorophyllide reductase is composed of three subunits; BchL, BchN and BchB. Forms a heterotetramer of two BchB and two BchN subunits. The cofactor is [4Fe-4S] cluster.

The catalysed reaction is chlorophyllide a + oxidized 2[4Fe-4S]-[ferredoxin] + 2 ADP + 2 phosphate = protochlorophyllide a + reduced 2[4Fe-4S]-[ferredoxin] + 2 ATP + 2 H2O. Its pathway is porphyrin-containing compound metabolism; bacteriochlorophyll biosynthesis (light-independent). In terms of biological role, component of the dark-operative protochlorophyllide reductase (DPOR) that uses Mg-ATP and reduced ferredoxin to reduce ring D of protochlorophyllide (Pchlide) to form chlorophyllide a (Chlide). This reaction is light-independent. The NB-protein (BchN-BchB) is the catalytic component of the complex. The sequence is that of Light-independent protochlorophyllide reductase subunit B from Rhodopseudomonas palustris (strain BisB18).